We begin with the raw amino-acid sequence, 625 residues long: Probable potassium transport system protein Kup (625 aa).

12 consecutive transmembrane segments (helical) span residues threonine 13–leucine 33, isoleucine 53–valine 73, isoleucine 103–threonine 123, valine 141–glutamine 161, phenylalanine 172–isoleucine 192, alanine 206–leucine 226, tryptophan 250–leucine 270, leucine 282–isoleucine 302, isoleucine 340–phenylalanine 360, alanine 369–isoleucine 389, valine 400–leucine 420, and isoleucine 422–threonine 442.

It belongs to the HAK/KUP transporter (TC 2.A.72) family.

Its subcellular location is the cell inner membrane. It catalyses the reaction K(+)(in) + H(+)(in) = K(+)(out) + H(+)(out). Transport of potassium into the cell. Likely operates as a K(+):H(+) symporter. This chain is Probable potassium transport system protein Kup, found in Acinetobacter baumannii (strain ACICU).